The primary structure comprises 418 residues: RuvB-like helicase 2 (418 aa).

65–72 (GDRGSGKT) provides a ligand contact to ATP.

The protein belongs to the RuvB family. As to quaternary structure, component of the SWR1 chromatin remodeling complex, the INO80 chromatin remodeling complex, and of the R2TP complex.

The protein localises to the nucleus. It carries out the reaction ATP + H2O = ADP + phosphate + H(+). Its function is as follows. DNA helicase which participates in several chromatin remodeling complexes, including the SWR1 and the INO80 complexes. The SWR1 complex mediates the ATP-dependent exchange of histone H2A for the H2A variant HZT1 leading to transcriptional regulation of selected genes by chromatin remodeling. The INO80 complex remodels chromatin by shifting nucleosomes and is involved in DNA repair. Also involved in pre-rRNA processing. This is RuvB-like helicase 2 (RVB2) from Encephalitozoon cuniculi (strain GB-M1) (Microsporidian parasite).